A 490-amino-acid polypeptide reads, in one-letter code: Betaine aldehyde dehydrogenase (490 aa).

Residues threonine 26 and aspartate 93 each contribute to the K(+) site. 150–152 (GAW) contributes to the NAD(+) binding site. Residue lysine 162 is the Charge relay system of the active site. 176–179 (KPSE) contacts NAD(+). Valine 180 contributes to the K(+) binding site. 230-233 (GVAT) contributes to the NAD(+) binding site. Leucine 246 is a binding site for K(+). The Proton acceptor role is filled by glutamate 252. Residues glycine 254, cysteine 286, and glutamate 387 each contribute to the NAD(+) site. The Nucleophile role is filled by cysteine 286. Residue cysteine 286 is modified to Cysteine sulfenic acid (-SOH). Lysine 457 and glycine 460 together coordinate K(+). The active-site Charge relay system is glutamate 464.

It belongs to the aldehyde dehydrogenase family. Dimer of dimers. K(+) is required as a cofactor.

It carries out the reaction betaine aldehyde + NAD(+) + H2O = glycine betaine + NADH + 2 H(+). It participates in amine and polyamine biosynthesis; betaine biosynthesis via choline pathway; betaine from betaine aldehyde: step 1/1. In terms of biological role, involved in the biosynthesis of the osmoprotectant glycine betaine. Catalyzes the irreversible oxidation of betaine aldehyde to the corresponding acid. The protein is Betaine aldehyde dehydrogenase of Stenotrophomonas maltophilia (strain K279a).